Here is a 115-residue protein sequence, read N- to C-terminus: Large ribosomal subunit protein uL22 (115 aa).

The protein belongs to the universal ribosomal protein uL22 family. Part of the 50S ribosomal subunit.

Its function is as follows. This protein binds specifically to 23S rRNA; its binding is stimulated by other ribosomal proteins, e.g. L4, L17, and L20. It is important during the early stages of 50S assembly. It makes multiple contacts with different domains of the 23S rRNA in the assembled 50S subunit and ribosome. In terms of biological role, the globular domain of the protein is located near the polypeptide exit tunnel on the outside of the subunit, while an extended beta-hairpin is found that lines the wall of the exit tunnel in the center of the 70S ribosome. The polypeptide is Large ribosomal subunit protein uL22 (Enterococcus faecalis (strain ATCC 700802 / V583)).